The sequence spans 175 residues: NADH dehydrogenase [ubiquinone] iron-sulfur protein 4, mitochondrial (175 aa).

A mitochondrion-targeting transit peptide spans 1 to 42 (MAAVSISVSLRQAMLGRRAMATAAVSVCRVPSRLLSTSTWKL). Ser173 is subject to Phosphoserine.

It belongs to the complex I NDUFS4 subunit family. This is a component of the iron-sulfur (IP) fragment of the enzyme. Interacts with BCAP31 and TOMM40; the interaction mediates its translocation to the mitochondria; the interaction with BCAP31 is direct.

It localises to the mitochondrion inner membrane. Accessory subunit of the mitochondrial membrane respiratory chain NADH dehydrogenase (Complex I), that is believed not to be involved in catalysis. Complex I functions in the transfer of electrons from NADH to the respiratory chain. The immediate electron acceptor for the enzyme is believed to be ubiquinone. This chain is NADH dehydrogenase [ubiquinone] iron-sulfur protein 4, mitochondrial (Ndufs4), found in Mus musculus (Mouse).